Here is a 228-residue protein sequence, read N- to C-terminus: UPF0758 protein SH1266 (228 aa).

Residues 102–224 (KITSPSDVSN…YASLVEEGYF (123 aa)) form the MPN domain. The Zn(2+) site is built by H173, H175, and D186. Positions 173–186 (HNHPSGDVTPSKED) match the JAMM motif motif.

Belongs to the UPF0758 family.

The sequence is that of UPF0758 protein SH1266 from Staphylococcus haemolyticus (strain JCSC1435).